The sequence spans 67 residues: MPKMKTKSSAKKRFKLTGTGKVKGNVAFKRHCLSAKSQKMKRQARGTFMLFKTDSDNVKKYFLPNGG.

It belongs to the bacterial ribosomal protein bL35 family.

The polypeptide is Large ribosomal subunit protein bL35 (Paramagnetospirillum magneticum (strain ATCC 700264 / AMB-1) (Magnetospirillum magneticum)).